The chain runs to 615 residues: MPIQVLPPQLANQIAAGEVVERPASVVKELVENSLDAGATRIDIDIERGGAKIIRIRDNGCGIKKDELALALARHATSKIASLDDLEAIISLGFRGEALASISSVSRLTLTSRTAEQQEAWQAYAEGRDMDVTVKPAAHPVGTTLEVLDLFYNTPARRKFLRTEKTEFNHIDEIIRRIALARFDVTINLSHNGKIVRQYRAVPEGGQKERRLGAICGTAFLEQALAIEWQHGDLTLRGWVADPNHTTPALAEIQYCYVNGRMMRDRLINHAIRQACEDKLGADQQPAFVLYLEIDPHQVDVNVHPAKHEVRFHQSRLVHDFIYQGVLSVLQQQLETPLPLDDEPQPAPRAIPENRVAAGRNHFAEPAAREPVAPRYTPAPASGSRPAAPWPNAQPGYQKQQGEVYRQLLQTPAPMQKPKAPEPQEPALAANSQSFGRVLTIVHSDCALLERDGNISLLALSVAERWLRQAQLTPGEAPVCAQPLLIPLRLKVSGEEKSALEKAQSALAELGIDFQSDAQHVTIRAVPLPLRQQNLQILIPELIGYLAKQSVFEPGNIAQWIARNLMSEHAQWSMAQAITLLADVERLCPQLVKTPPGGLLQSVDLHPAIKALKDE.

The tract at residues 363-397 (FAEPAAREPVAPRYTPAPASGSRPAAPWPNAQPGY) is disordered. Low complexity predominate over residues 364 to 391 (AEPAAREPVAPRYTPAPASGSRPAAPWP).

This sequence belongs to the DNA mismatch repair MutL/HexB family.

This protein is involved in the repair of mismatches in DNA. It is required for dam-dependent methyl-directed DNA mismatch repair. May act as a 'molecular matchmaker', a protein that promotes the formation of a stable complex between two or more DNA-binding proteins in an ATP-dependent manner without itself being part of a final effector complex. The protein is DNA mismatch repair protein MutL of Escherichia coli (strain ATCC 8739 / DSM 1576 / NBRC 3972 / NCIMB 8545 / WDCM 00012 / Crooks).